Reading from the N-terminus, the 585-residue chain is Formate--tetrahydrofolate ligase (585 aa).

65–72 is an ATP binding site; it reads TPHGEGKT.

The protein belongs to the formate--tetrahydrofolate ligase family.

It catalyses the reaction (6S)-5,6,7,8-tetrahydrofolate + formate + ATP = (6R)-10-formyltetrahydrofolate + ADP + phosphate. Its pathway is one-carbon metabolism; tetrahydrofolate interconversion. The protein is Formate--tetrahydrofolate ligase of Shewanella baltica (strain OS195).